Here is an 82-residue protein sequence, read N- to C-terminus: Delta-conotoxin-like CnVIA (82 aa).

A signal peptide spans 1 to 22 (MKLTCMMIVAVLFLTAWTFVTA). Residues 23–49 (DDSRNGLENLSPKARHEMKNPEASKSN) constitute a propeptide that is removed on maturation. Intrachain disulfides connect Cys-54-Cys-69, Cys-61-Cys-73, and Cys-68-Cys-78.

The protein belongs to the conotoxin O1 superfamily. In terms of tissue distribution, expressed by the venom duct.

The protein localises to the secreted. Its function is as follows. Delta-conotoxins bind to site 6 of voltage-gated sodium channels (Nav) and inhibit the inactivation process. The sequence is that of Delta-conotoxin-like CnVIA from Conus consors (Singed cone).